A 335-amino-acid chain; its full sequence is Protein-lysine N-methyltransferase EEF2KMT (335 aa).

N-acetylmethionine is present on Met1. S-adenosyl-L-methionine-binding positions include Trp139, 165–167 (GSG), Trp228, and Ala247.

Belongs to the class I-like SAM-binding methyltransferase superfamily. EEF2KMT family. As to quaternary structure, interacts with FAM86B2 and FAM86C1P.

It is found in the cytoplasm. The catalysed reaction is L-lysyl-[protein] + 3 S-adenosyl-L-methionine = N(6),N(6),N(6)-trimethyl-L-lysyl-[protein] + 3 S-adenosyl-L-homocysteine + 3 H(+). In terms of biological role, catalyzes the trimethylation of eukaryotic elongation factor 2 (EEF2) on 'Lys-525'. The polypeptide is Protein-lysine N-methyltransferase EEF2KMT (Eef2kmt) (Mus musculus (Mouse)).